The chain runs to 217 residues: Protein-L-isoaspartate O-methyltransferase (217 aa).

The active site involves Ser61.

The protein belongs to the methyltransferase superfamily. L-isoaspartyl/D-aspartyl protein methyltransferase family.

Its subcellular location is the cytoplasm. It catalyses the reaction [protein]-L-isoaspartate + S-adenosyl-L-methionine = [protein]-L-isoaspartate alpha-methyl ester + S-adenosyl-L-homocysteine. Functionally, catalyzes the methyl esterification of L-isoaspartyl residues in peptides and proteins that result from spontaneous decomposition of normal L-aspartyl and L-asparaginyl residues. It plays a role in the repair and/or degradation of damaged proteins. The sequence is that of Protein-L-isoaspartate O-methyltransferase from Syntrophotalea carbinolica (strain DSM 2380 / NBRC 103641 / GraBd1) (Pelobacter carbinolicus).